We begin with the raw amino-acid sequence, 316 residues long: Protein U25 (316 aa).

The protein belongs to the herpesviridae US22 family.

This chain is Protein U25 (U25), found in Human herpesvirus 6B (HHV-6 variant B).